The sequence spans 398 residues: Cytochrome P450 165B3 (398 aa).

Cys347 contributes to the heme binding site.

It belongs to the cytochrome P450 family. Heme serves as cofactor.

Its pathway is antibiotic biosynthesis; vancomycin biosynthesis. Involved in the coupling of aromatic side chains of the heptapeptide of vancomycin. The polypeptide is Cytochrome P450 165B3 (cyp165B3) (Amycolatopsis orientalis (Nocardia orientalis)).